Reading from the N-terminus, the 446-residue chain is Divalent metal cation transporter MntH (446 aa).

Transmembrane regions (helical) follow at residues 32 to 52, 59 to 79, 107 to 127, 139 to 159, 168 to 188, 210 to 230, 264 to 284, 303 to 323, 355 to 375, 381 to 401, and 420 to 440; these read FSFL…GNWI, AQFG…AMLL, AFVF…AEVI, IPLL…LFIM, AIVG…VFIA, GALF…NLYL, SIAF…FFGV, PLLG…ALLA, LITR…FNSN, QLLV…LIPL, and VNII…YLII.

Belongs to the NRAMP family.

The protein resides in the cell membrane. In terms of biological role, h(+)-stimulated, divalent metal cation uptake system. This is Divalent metal cation transporter MntH from Staphylococcus saprophyticus subsp. saprophyticus (strain ATCC 15305 / DSM 20229 / NCIMB 8711 / NCTC 7292 / S-41).